A 470-amino-acid chain; its full sequence is Probable tocopherol cyclase, chloroplastic (470 aa).

The N-terminal 61 residues, 1–61 (MDLAAAAVAV…APTPRDRALR (61 aa)), are a transit peptide targeting the chloroplast. The segment at 14 to 48 (RPAPPPRRCAPRRHRRALAPRAASSSPSPSTAVAA) is disordered. The span at 22 to 31 (CAPRRHRRAL) shows a compositional bias: basic residues. Low complexity predominate over residues 32–48 (APRAASSSPSPSTAVAA).

Expressed in the roots, stems, leaves and spikelets.

It is found in the plastid. The protein localises to the chloroplast. It localises to the plastoglobule. The protein operates within cofactor biosynthesis; tocopherol biosynthesis. Functionally, involved in the synthesis of both tocopherols and tocotrienols (vitamin E), which presumably protect photosynthetic complexes from oxidative stress. Catalyzes the conversion of 2-methyl-6-phytyl-1,4-hydroquinone and 2,3-dimethyl-5-phytyl-1,4-hydroquinone (DMPQ) to delta- and gamma-tocopherol respectively. Also converts 2,3-dimethyl-5-geranylgeranyl-1,4-hydroquinone (DMGQ) to gamma-tocotrienol. This Oryza sativa subsp. japonica (Rice) protein is Probable tocopherol cyclase, chloroplastic (VTE1).